A 454-amino-acid chain; its full sequence is Putative serine/threonine-protein phosphatase C27B7.6 (454 aa).

Mn(2+) contacts are provided by Asp65, His67, Asp93, and Asn125. His126 (proton donor) is an active-site residue. 2 residues coordinate Mn(2+): His174 and His252. Residues 414 to 454 form a disordered region; that stretch reads RKKLGMTTSTTPPPPRTPSPDAPLAQSPPIPRSPPSSTENA. Pro residues predominate over residues 424–447; that stretch reads TPPPPRTPSPDAPLAQSPPIPRSP.

Belongs to the PPP phosphatase family. PP-1 subfamily. The cofactor is Mn(2+).

The enzyme catalyses O-phospho-L-seryl-[protein] + H2O = L-seryl-[protein] + phosphate. It catalyses the reaction O-phospho-L-threonyl-[protein] + H2O = L-threonyl-[protein] + phosphate. The polypeptide is Putative serine/threonine-protein phosphatase C27B7.6 (Caenorhabditis elegans).